Reading from the N-terminus, the 255-residue chain is H-2 class II histocompatibility antigen, E-D alpha chain (255 aa).

A signal peptide spans 1-25 (MATIGALVLRFFFIAVLMSSQKSWA). The segment at 26-109 (IKEEHTIIQA…ERSNNTPDAN (84 aa)) is alpha-1. At 26 to 216 (IKEEHTIIQA…EKTLLPETKE (191 aa)) the chain is on the extracellular side. An alpha-2 region spans residues 110–203 (VAPEVTVLSR…GLEEPLRKTW (94 aa)). In terms of domain architecture, Ig-like C1-type spans 112–204 (PEVTVLSRSP…LEEPLRKTWE (93 aa)). C132 and C188 form a disulfide bridge. An N-linked (GlcNAc...) asparagine glycan is attached at N143. The connecting peptide stretch occupies residues 204-216 (EFEEKTLLPETKE). A helical membrane pass occupies residues 217-242 (NVMCALGLFVGLVGIVVGIILIMKGI). The Cytoplasmic portion of the chain corresponds to 243–255 (KKRNVVERRQGAL).

Belongs to the MHC class II family.

The protein localises to the membrane. In Mus musculus (Mouse), this protein is H-2 class II histocompatibility antigen, E-D alpha chain (H2-Ea).